Consider the following 82-residue polypeptide: MAVRMRLKRMGAKKQPSYRIVVADVRAPRDGRFIEELGHYNPTTEPVTLEINEEKAKKWLQEGAKPSQKVRSLLTQAGVVEK.

Belongs to the bacterial ribosomal protein bS16 family.

The sequence is that of Small ribosomal subunit protein bS16 from Natranaerobius thermophilus (strain ATCC BAA-1301 / DSM 18059 / JW/NM-WN-LF).